The sequence spans 869 residues: Speckle targeted PIP5K1A-regulated poly(A) polymerase (869 aa).

The Matrin-type zinc finger occupies 16–46 (FRCCLCDVTTANRPSLDAHLKGRKHRDLVQL). The region spanning 56–128 (RSVFVSGFPR…HGLRVRPREQ (73 aa)) is the RRM domain. The disordered stretch occupies residues 114–144 (HSLGGHGLRVRPREQKEFQSPASKSPKGVDS). Residue Ser-205 participates in ATP binding. The Mg(2+) site is built by Asp-216 and Asp-218. Asp-216 and Asp-218 together coordinate UTP. 2 disordered regions span residues 226 to 247 (MEET…LDSA) and 259 to 335 (CTPA…ASKD). 2 stretches are compositionally biased toward polar residues: residues 266–276 (DSLSPTSVQES) and 283–299 (TPSS…LGSD). Residues 314–335 (QEDRKEGKQGKELELAEEASKD) are compositionally biased toward basic and acidic residues. Residue Asn-395 participates in ATP binding. Residues Asn-395, Arg-417, Tyr-435, and His-552 each contribute to the UTP site. The 59-residue stretch at 494–552 (LSSLLAQFFSCVSCLDLSGSLLSLREGRPLMVAEGLPSDLWEGLRLGPMNLQDPFDLSH) folds into the PAP-associated domain. Positions 601-869 (SSPSSLLSAK…IPQALKNLLK (269 aa)) are KA1; binds the bulging loops of U6 snRNA but is dispensable for terminal uridylyltransferase activity. Disordered stretches follow at residues 640 to 689 (QGTK…DHSE), 735 to 757 (MKPE…HPSS), 775 to 796 (ARRR…TGAE), and 803 to 822 (RVTQ…PGEP). Residues 671-689 (KSFEEGKEEPQGCAGDHSE) show a composition bias toward basic and acidic residues. 2 positions are modified to phosphoserine: Ser-688 and Ser-744.

Belongs to the DNA polymerase type-B-like family. Associates with the cleavage and polyadenylation specificity factor (CPSF) complex. Interacts with CPSF1 and CPSF3; the interaction is direct. Interacts with PIP5K1A. It depends on Mg(2+) as a cofactor. Requires Mn(2+) as cofactor. In terms of processing, phosphorylated by CK1 in the proline-rich (Pro-rich) region.

Its subcellular location is the nucleus. It localises to the nucleolus. The protein resides in the nucleus speckle. It catalyses the reaction RNA(n) + UTP = RNA(n)-3'-uridine ribonucleotide + diphosphate. The enzyme catalyses RNA(n) + ATP = RNA(n)-3'-adenine ribonucleotide + diphosphate. Adenylyltransferase activity is specifically phosphatidylinositol 4,5-bisphosphate (PtdIns(4,5)P2). Its function is as follows. Poly(A) polymerase that creates the 3'-poly(A) tail of specific pre-mRNAs. Localizes to nuclear speckles together with PIP5K1A and mediates polyadenylation of a select set of mRNAs, such as HMOX1. In addition to polyadenylation, it is also required for the 3'-end cleavage of pre-mRNAs: binds to the 3'UTR of targeted pre-mRNAs and promotes the recruitment and assembly of the CPSF complex on the 3'UTR of pre-mRNAs. In addition to adenylyltransferase activity, also has uridylyltransferase activity. However, the ATP ratio is higher than UTP in cells, suggesting that it functions primarily as a poly(A) polymerase. Acts as a specific terminal uridylyltransferase for U6 snRNA in vitro: responsible for a controlled elongation reaction that results in the restoration of the four 3'-terminal UMP-residues found in newly transcribed U6 snRNA. Not involved in replication-dependent histone mRNA degradation. This Mus musculus (Mouse) protein is Speckle targeted PIP5K1A-regulated poly(A) polymerase (Tut1).